A 182-amino-acid polypeptide reads, in one-letter code: Proline-rich protein, Y-linked (182 aa).

Disordered regions lie at residues 1–22 (MMRR…KPRD) and 89–108 (VPAD…PPPG). The span at 91-108 (ADPPPASPYRTSPRPPPG) shows a compositional bias: pro residues. Residues 154–167 (WMKLETIILSKLSQ) form the DUF1725 domain.

The protein is Proline-rich protein, Y-linked (PRORY) of Homo sapiens (Human).